We begin with the raw amino-acid sequence, 156 residues long: IEAMAHHIVPARDVLYLGRGTDYPLALEGALKLKEISYIHAEGYAAGEMKHGPIALIDELVPVICIAPSGPLFEKTVSNMQEVQARGGKVVLISAYDGVQAAGEGCLATITMPKVHPLIAPMVYAVPVQLLAYHVAVLKGTDVDQPRNLAKSVTVE.

The region spanning 4-146 is the SIS domain; it reads MAHHIVPARD…VLKGTDVDQP (143 aa). The active-site For Fru-6P isomerization activity is the lysine 151.

In terms of assembly, homodimer.

It localises to the cytoplasm. The enzyme catalyses D-fructose 6-phosphate + L-glutamine = D-glucosamine 6-phosphate + L-glutamate. In terms of biological role, catalyzes the first step in hexosamine metabolism, converting fructose-6P into glucosamine-6P using glutamine as a nitrogen source. The sequence is that of Glutamine--fructose-6-phosphate aminotransferase [isomerizing] (glmS) from Sphingobium yanoikuyae (Sphingomonas yanoikuyae).